Here is a 714-residue protein sequence, read N- to C-terminus: Fatty acid oxidation complex subunit alpha (714 aa).

The enoyl-CoA hydratase stretch occupies residues 1 to 190 (MEMASAFTLN…KLGLVDDVVP (190 aa)). The 3-hydroxyacyl-CoA dehydrogenase stretch occupies residues 306–714 (APLNSVGILG…FWKTTATDLQ (409 aa)).

In the N-terminal section; belongs to the enoyl-CoA hydratase/isomerase family. This sequence in the central section; belongs to the 3-hydroxyacyl-CoA dehydrogenase family. In terms of assembly, heterotetramer of two alpha chains (FadJ) and two beta chains (FadI).

It is found in the cytoplasm. The catalysed reaction is a (3S)-3-hydroxyacyl-CoA = a (2E)-enoyl-CoA + H2O. It carries out the reaction a 4-saturated-(3S)-3-hydroxyacyl-CoA = a (3E)-enoyl-CoA + H2O. It catalyses the reaction a (3S)-3-hydroxyacyl-CoA + NAD(+) = a 3-oxoacyl-CoA + NADH + H(+). The enzyme catalyses (3S)-3-hydroxybutanoyl-CoA = (3R)-3-hydroxybutanoyl-CoA. It functions in the pathway lipid metabolism; fatty acid beta-oxidation. Catalyzes the formation of a hydroxyacyl-CoA by addition of water on enoyl-CoA. Also exhibits 3-hydroxyacyl-CoA epimerase and 3-hydroxyacyl-CoA dehydrogenase activities. In Shigella boydii serotype 18 (strain CDC 3083-94 / BS512), this protein is Fatty acid oxidation complex subunit alpha.